Consider the following 207-residue polypeptide: MAKTYDYLFKLLLIGDSGVGKTCVLFRFSEDAFNSTFISTIGIDFKIRTIELDGKRIKLQIWDTAGQERFRTITTAYYRGAMGIMLVYDITNEKSFDNIRNWIRNIEEHASADVEKMILGNKCDVNDKRQVSKERGEKLALDYGIKFMETSAKANINVENAFYTLARDIKAKMDKKLEGNSPQGSNQGVKITPDQQKRSSFFRCVLL.

Residues Ser17, Gly18, Val19, Gly20, Lys21, Thr22, Cys23, Ser35, Ser39, and Thr40 each coordinate GTP. Residue Thr22 coordinates Mg(2+). 2 consecutive short sequence motifs (switch) follow at residues 31 to 45 (DAFN…GIDF) and 63 to 80 (DTAG…YYRG). The Mg(2+) site is built by Thr40 and Asp63. GTP is bound at residue Gly66. At Thr72 the chain carries Phosphothreonine. Asn121, Lys122, Asp124, Ala152, and Lys153 together coordinate GTP. Phosphoserine occurs at positions 181 and 185. Cys204 is subject to Cysteine methyl ester. Cys204 carries the S-geranylgeranyl cysteine lipid modification. Residues 205 to 207 (VLL) constitute a propeptide, removed in mature form.

It belongs to the small GTPase superfamily. Rab family. Interacts (GTP-bound form) with MICALL1; regulates RAB8A association with recycling endosomes. Interacts with MICALL2; competes with RAB13 and is involved in E-cadherin endocytic recycling. Interacts (GTP-bound form) with MICAL1, MICALCL, MICAL3, EHBP1 and EHBP1L1; at least in case of MICAL1, MICALCL, MICAL3 and EHBP1L1 two molecules of RAB8A can bind to one molecule of the effector protein; ternary complexes of RAB8A, RAB13 and either MICAL1 or EHBP1L1 are possible. Interacts with EHD1. Interacts with MAP4K2 and SYTL4. Interacts with SGSM1 and SGSM3. Interacts with RABIF, RIMS2, RPH3A and RPH3A. Interacts with OPTN. Interacts with RAB3IP, RAB3IP functions as guanine exchange factor (GEF). Interacts with MYO5B. Interacts with CIMAP3. Interacts with BIRC6/bruce. Interacts with OCRL. Interacts with AHI1. Interacts with DCDC1. Interacts with LRRK2; interaction facilitates phosphorylation of Thr-72. Interacts with RAB31P, GDI1, GDI2, CHM, CHML, RABGGTA, RABGGTB, TBC1D15 and INPP5B; these interactions are dependent on Thr-72 not being phosphorylated. Interacts with RILPL1 and RILPL2; these interactions are dependent on the phosphorylation of Thr-72 by LRRK2. Interacts with DZIP1; prevents inhibition by the GDP-dissociation inhibitor GDI2. Interacts (in GDP-bound form) with RAB3IP/Rabin8, RAB3IP functions as guanine exchange factor (GEF) towards RAB8A. Interacts (in GDP-bound form) with RPGR, RPGR functions as GEF towards RAB8A. Mg(2+) is required as a cofactor. In terms of processing, phosphorylation of Thr-72 in the switch II region by LRRK2 prevents the association of RAB regulatory proteins, including CHM, CHML and RAB GDP dissociation inhibitors GDI1 and GDI2. Phosphorylation by LRRK2 is required for localization to stressed lysosomes.

Its subcellular location is the cell membrane. The protein localises to the golgi apparatus. The protein resides in the endosome membrane. It is found in the recycling endosome membrane. It localises to the cell projection. Its subcellular location is the cilium. The protein localises to the cytoplasmic vesicle. The protein resides in the phagosome membrane. It is found in the cytoplasm. It localises to the cytoskeleton. Its subcellular location is the microtubule organizing center. The protein localises to the centrosome. The protein resides in the centriole. It is found in the cilium basal body. It localises to the midbody. Its subcellular location is the lysosome. The catalysed reaction is GTP + H2O = GDP + phosphate + H(+). Regulated by guanine nucleotide exchange factors (GEFs) such as RAB3IP/Rabin8 and RPGR which promote the exchange of bound GDP for free GTP, GTPase activating proteins (GAPs) which increase the GTP hydrolysis activity, and GDP dissociation inhibitors (GDIs) which inhibit the dissociation of the nucleotide from the GTPase. Activated in response to insulin. Its function is as follows. The small GTPases Rab are key regulators of intracellular membrane trafficking, from the formation of transport vesicles to their fusion with membranes. Rabs cycle between an inactive GDP-bound form and an active GTP-bound form that is able to recruit to membranes different sets of downstream effectors directly responsible for vesicle formation, movement, tethering and fusion. RAB8A is involved in polarized vesicular trafficking and neurotransmitter release. Together with RAB11A, RAB3IP, the exocyst complex, PARD3, PRKCI, ANXA2, CDC42 and DNMBP promotes transcytosis of PODXL to the apical membrane initiation sites (AMIS), apical surface formation and lumenogenesis. Regulates the compacted morphology of the Golgi. Together with MYO5B and RAB11A participates in epithelial cell polarization. Also involved in membrane trafficking to the cilium and ciliogenesis. Together with MICALL2, may also regulate adherens junction assembly. May play a role in insulin-induced transport to the plasma membrane of the glucose transporter GLUT4 and therefore play a role in glucose homeostasis. Involved in autophagy. Participates in the export of a subset of neosynthesized proteins through a Rab8-Rab10-Rab11-dependent endososomal export route. Targeted to and stabilized on stressed lysosomes through LRRK2 phosphorylation. Suppresses stress-induced lysosomal enlargement through EHBP1 and EHNP1L1 effector proteins. The sequence is that of Ras-related protein Rab-8A (RAB8A) from Bos taurus (Bovine).